Reading from the N-terminus, the 368-residue chain is MHVVRLSIHRLRRFHTVELHPSSTLNLLTGDNGAGKTSVLEALHLMAYGRSFRGRVRDGLIQQGANDLEVFVEWKEGNGAAGERTRRAGLRHRGQEWTGRLDGEDVAQLGALCAALAVVTFEPGSHVLISGGGEPRRRFLDWGLFHVEPDFLTMWRRYARALKQRNALLKQGAQPRMLDAWDHELAESGESLTSRRTRYLERLQERLVPVADAIAPALGLSALTFAPGWKRHEVSLADALLLARERDRQNGYTSQGPHRADWVPSFQALPGRDALSRGQAKLTALACLLAQAEDFAYERGEWPVIALDDLGSELDRHHQGRVLQRLASAPAQVLITATETPPGLADAGALLQQFHVEHGHITRQAAAH.

30–37 (GDNGAGKT) provides a ligand contact to ATP.

The protein belongs to the RecF family.

Its subcellular location is the cytoplasm. Functionally, the RecF protein is involved in DNA metabolism; it is required for DNA replication and normal SOS inducibility. RecF binds preferentially to single-stranded, linear DNA. It also seems to bind ATP. The polypeptide is DNA replication and repair protein RecF (Xanthomonas euvesicatoria pv. vesicatoria (strain 85-10) (Xanthomonas campestris pv. vesicatoria)).